The primary structure comprises 242 residues: Small ribosomal subunit protein uS2 (242 aa).

It belongs to the universal ribosomal protein uS2 family.

This is Small ribosomal subunit protein uS2 from Shewanella halifaxensis (strain HAW-EB4).